An 840-amino-acid chain; its full sequence is Wings apart-like protein 2 (840 aa).

Disordered stretches follow at residues 1–37, 56–78, and 532–594; these read MMERTYGRRKPGMLNDDVSRAEHIFPSSSSPELEPVD, SDNDFSEKRNKRPRNGGGGFGSN, and FDLE…DHHV. Positions 546-557 are enriched in basic residues; that stretch reads KQKKSKGQKRKG. Basic and acidic residues predominate over residues 558-567; that stretch reads SYRDKKDERS. A compositionally biased stretch (polar residues) spans 569 to 585; the sequence is QLFSSQEESNHGLNSQE. In terms of domain architecture, WAPL spans 764-819; that stretch reads KEAEKMIVEAYSALLLAFLSTESRSIRNAIRDYLPKRDMAILVPVLDRFVAFHTTL.

This sequence belongs to the WAPL family. In terms of assembly, interacts with the cohesin complex throughout the cell cycle. As to expression, expressed in roots, leaves, buds and siliques.

It localises to the nucleus. The protein localises to the chromosome. Functionally, regulator of sister chromatid cohesion in meiosis which negatively regulates cohesin association with chromatin, acting as an antagonist of CTF7. Cohesion ensures that chromosome partitioning is accurate in both meiotic and mitotic cells and plays an important role in DNA repair. Essential for the prophase removal of cohesin during meiosis thus determining the timely release of meiotic cohesion. Important for proper spindle attachment and assembly during meiosis. Helps to prevent abnormal centromere association during prophase I in meiocytes. Required for early embryonic patterning. Also involved in chromosome segregation during mitosis. The polypeptide is Wings apart-like protein 2 (Arabidopsis thaliana (Mouse-ear cress)).